The sequence spans 440 residues: Eukaryotic translation initiation factor 3 subunit E (440 aa).

Residues 219 to 392 (VYFNYPKGRD…GQVVMGAKTT (174 aa)) form the PCI domain.

It belongs to the eIF-3 subunit E family. In terms of assembly, component of the eukaryotic translation initiation factor 3 (eIF-3) complex.

It is found in the cytoplasm. Functionally, component of the eukaryotic translation initiation factor 3 (eIF-3) complex, which is involved in protein synthesis of a specialized repertoire of mRNAs and, together with other initiation factors, stimulates binding of mRNA and methionyl-tRNAi to the 40S ribosome. The eIF-3 complex specifically targets and initiates translation of a subset of mRNAs involved in cell proliferation. This is Eukaryotic translation initiation factor 3 subunit E from Brugia malayi (Filarial nematode worm).